We begin with the raw amino-acid sequence, 119 residues long: Protein Wnt-4 (119 aa).

S1 carries the O-palmitoleoyl serine; by PORCN lipid modification. 2 disulfides stabilise this stretch: C69/C100 and C85/C95. N-linked (GlcNAc...) asparagine glycosylation is present at N86.

It belongs to the Wnt family. Post-translationally, palmitoleoylation is required for efficient binding to frizzled receptors. Depalmitoleoylation leads to Wnt signaling pathway inhibition.

Its subcellular location is the secreted. The protein resides in the extracellular space. It localises to the extracellular matrix. Ligand for members of the frizzled family of seven transmembrane receptors. Plays an important role in embryonic development. This is Protein Wnt-4 (WNT-4) from Sceloporus occidentalis (Western fence lizard).